An 833-amino-acid polypeptide reads, in one-letter code: Endoribonuclease YSH1 (833 aa).

Residues His84, His86, Asp88, His89, His174, and Asp195 each contribute to the Zn(2+) site. His443 (proton donor) is an active-site residue. Zn(2+) is bound at residue His465. Disordered stretches follow at residues 600 to 624 (RRAK…SKQE), 685 to 707 (KRSS…HSAT), and 728 to 767 (VAPV…DAQL). Basic and acidic residues-rich tracts occupy residues 694–707 (SHDL…HSAT) and 744–759 (DKNK…MKTD).

It belongs to the metallo-beta-lactamase superfamily. RNA-metabolizing metallo-beta-lactamase-like family. CPSF2/YSH1 subfamily.

It is found in the nucleus. Functionally, component of the cleavage factor I (CF I) involved in pre-mRNA 3'-end processing. The polypeptide is Endoribonuclease YSH1 (YSH1) (Gibberella zeae (strain ATCC MYA-4620 / CBS 123657 / FGSC 9075 / NRRL 31084 / PH-1) (Wheat head blight fungus)).